The chain runs to 392 residues: Metacaspase-1 (392 aa).

The segment covering 1 to 14 has biased composition (polar residues); sequence MYPGSGNYSYNNRP. Residues 1 to 87 are disordered; sequence MYPGSGNYSY…PSSIQQGNGQ (87 aa). Residues 41 to 51 show a composition bias toward low complexity; that stretch reads QQQQYQDQYQG. A compositionally biased stretch (polar residues) spans 53 to 63; it reads NRGQYQGQYQD. Catalysis depends on residues His-182 and Cys-238.

This sequence belongs to the peptidase C14B family.

In terms of biological role, involved in cell death (apoptosis). The chain is Metacaspase-1 (MCA1) from Candida glabrata (strain ATCC 2001 / BCRC 20586 / JCM 3761 / NBRC 0622 / NRRL Y-65 / CBS 138) (Yeast).